Here is a 348-residue protein sequence, read N- to C-terminus: Holliday junction branch migration complex subunit RuvB (348 aa).

Positions 4 to 184 (ADRLIAASGR…FGIVQRLEFY (181 aa)) are large ATPase domain (RuvB-L). Residues Ile-23, Arg-24, Gly-65, Lys-68, Thr-69, Thr-70, 131 to 133 (EDF), Arg-174, Tyr-184, and Arg-221 each bind ATP. Thr-69 lines the Mg(2+) pocket. The small ATPAse domain (RuvB-S) stretch occupies residues 185-255 (NDKDLSTIVS…VADMALNLLD (71 aa)). The tract at residues 258–348 (ERGFDHSDRR…GGDFSEPGDE (91 aa)) is head domain (RuvB-H). Residues Arg-294, Arg-313, and Arg-318 each contribute to the DNA site.

This sequence belongs to the RuvB family. Homohexamer. Forms an RuvA(8)-RuvB(12)-Holliday junction (HJ) complex. HJ DNA is sandwiched between 2 RuvA tetramers; dsDNA enters through RuvA and exits via RuvB. An RuvB hexamer assembles on each DNA strand where it exits the tetramer. Each RuvB hexamer is contacted by two RuvA subunits (via domain III) on 2 adjacent RuvB subunits; this complex drives branch migration. In the full resolvosome a probable DNA-RuvA(4)-RuvB(12)-RuvC(2) complex forms which resolves the HJ.

Its subcellular location is the cytoplasm. The enzyme catalyses ATP + H2O = ADP + phosphate + H(+). Functionally, the RuvA-RuvB-RuvC complex processes Holliday junction (HJ) DNA during genetic recombination and DNA repair, while the RuvA-RuvB complex plays an important role in the rescue of blocked DNA replication forks via replication fork reversal (RFR). RuvA specifically binds to HJ cruciform DNA, conferring on it an open structure. The RuvB hexamer acts as an ATP-dependent pump, pulling dsDNA into and through the RuvAB complex. RuvB forms 2 homohexamers on either side of HJ DNA bound by 1 or 2 RuvA tetramers; 4 subunits per hexamer contact DNA at a time. Coordinated motions by a converter formed by DNA-disengaged RuvB subunits stimulates ATP hydrolysis and nucleotide exchange. Immobilization of the converter enables RuvB to convert the ATP-contained energy into a lever motion, pulling 2 nucleotides of DNA out of the RuvA tetramer per ATP hydrolyzed, thus driving DNA branch migration. The RuvB motors rotate together with the DNA substrate, which together with the progressing nucleotide cycle form the mechanistic basis for DNA recombination by continuous HJ branch migration. Branch migration allows RuvC to scan DNA until it finds its consensus sequence, where it cleaves and resolves cruciform DNA. This chain is Holliday junction branch migration complex subunit RuvB, found in Pseudomonas putida (strain ATCC 47054 / DSM 6125 / CFBP 8728 / NCIMB 11950 / KT2440).